Here is a 907-residue protein sequence, read N- to C-terminus: Collagen alpha-2(I) chain (907 aa).

Disordered regions lie at residues 1 to 183 (GPMG…GIPG) and 199 to 907 (IPGP…PGPS). Residues 19–33 (AGEDGHPGKPGRERG) show a composition bias toward basic and acidic residues. Composition is skewed to low complexity over residues 101–130 (VGAP…SAGP), 155–169 (AGPR…VSGP), and 206–221 (PGPV…RGIV). Asn260 is subject to Deamidated asparagine. Pro272 carries the 4-hydroxyproline modification. 8 stretches are compositionally biased toward low complexity: residues 272–281 (PGIRGSRGIP), 292–307 (PPGS…VRGP), 340–362 (PAGI…RGEP), 424–441 (PGES…SRGP), 453–475 (EPGV…PGER), 495–507 (APGA…PAGA), 535–555 (VGPA…QPGA), and 566–581 (NGPV…AGPA). Gly residues predominate over residues 591 to 600 (GSRGDGGPPG). Composition is skewed to low complexity over residues 601–611 (ATGFPGAAGRT), 664–691 (EAGT…IPGS), 706–745 (EPGP…NPGN), 756–766 (NSGPVGAAGAP), and 783–804 (EPGP…PSGP). Over residues 808–819 (RGDKGEPGDKGP) the composition is skewed to basic and acidic residues. Over residues 892-907 (AGPPGPPGPPGPPGPS) the composition is skewed to pro residues.

The protein belongs to the fibrillar collagen family. As to quaternary structure, trimers of one alpha 2(I) and two alpha 1(I) chains. Interacts (via C-terminus) with TMEM131 (via PapD-L domain); the interaction is direct and is involved in assembly and TRAPPIII ER-to-Golgi transport complex-dependent secretion of collagen. Prolines at the third position of the tripeptide repeating unit (G-X-Y) are hydroxylated in some or all of the chains. Forms the fibrils of tendon, ligaments and bones. In bones, the fibrils are mineralized with calcium hydroxyapatite.

It localises to the secreted. It is found in the extracellular space. Its subcellular location is the extracellular matrix. Functionally, type I collagen is a member of group I collagen (fibrillar forming collagen). In Macrauchenia sp, this protein is Collagen alpha-2(I) chain.